A 330-amino-acid polypeptide reads, in one-letter code: Holliday junction branch migration complex subunit RuvB (330 aa).

The large ATPase domain (RuvB-L) stretch occupies residues 1–181 (MEDRLVGCRL…FGVINKLELY (181 aa)). Residues Leu20, Arg21, Gly62, Lys65, Thr66, Thr67, 128–130 (EDY), Arg171, Tyr181, and Arg218 contribute to the ATP site. Mg(2+) is bound at residue Thr66. Residues 182–252 (SVEELGQIVK…IARTGLEALE (71 aa)) form a small ATPAse domain (RuvB-S) region. A head domain (RuvB-H) region spans residues 255-330 (EIGLDAVDRN…AYEHFGLKYE (76 aa)). DNA contacts are provided by Lys310 and Arg315.

This sequence belongs to the RuvB family. In terms of assembly, homohexamer. Forms an RuvA(8)-RuvB(12)-Holliday junction (HJ) complex. HJ DNA is sandwiched between 2 RuvA tetramers; dsDNA enters through RuvA and exits via RuvB. An RuvB hexamer assembles on each DNA strand where it exits the tetramer. Each RuvB hexamer is contacted by two RuvA subunits (via domain III) on 2 adjacent RuvB subunits; this complex drives branch migration. In the full resolvosome a probable DNA-RuvA(4)-RuvB(12)-RuvC(2) complex forms which resolves the HJ.

The protein localises to the cytoplasm. It carries out the reaction ATP + H2O = ADP + phosphate + H(+). The RuvA-RuvB-RuvC complex processes Holliday junction (HJ) DNA during genetic recombination and DNA repair, while the RuvA-RuvB complex plays an important role in the rescue of blocked DNA replication forks via replication fork reversal (RFR). RuvA specifically binds to HJ cruciform DNA, conferring on it an open structure. The RuvB hexamer acts as an ATP-dependent pump, pulling dsDNA into and through the RuvAB complex. RuvB forms 2 homohexamers on either side of HJ DNA bound by 1 or 2 RuvA tetramers; 4 subunits per hexamer contact DNA at a time. Coordinated motions by a converter formed by DNA-disengaged RuvB subunits stimulates ATP hydrolysis and nucleotide exchange. Immobilization of the converter enables RuvB to convert the ATP-contained energy into a lever motion, pulling 2 nucleotides of DNA out of the RuvA tetramer per ATP hydrolyzed, thus driving DNA branch migration. The RuvB motors rotate together with the DNA substrate, which together with the progressing nucleotide cycle form the mechanistic basis for DNA recombination by continuous HJ branch migration. Branch migration allows RuvC to scan DNA until it finds its consensus sequence, where it cleaves and resolves cruciform DNA. This chain is Holliday junction branch migration complex subunit RuvB, found in Acetivibrio thermocellus (strain ATCC 27405 / DSM 1237 / JCM 9322 / NBRC 103400 / NCIMB 10682 / NRRL B-4536 / VPI 7372) (Clostridium thermocellum).